The following is a 206-amino-acid chain: uncharacterized protein (206 aa).

Disordered regions lie at residues 38–88 (RLQQ…NKNA) and 160–206 (HQNT…SVQE). A compositionally biased stretch (low complexity) spans 40–73 (QQQQQQQQQQQQNRTASSLQQPQQQQPISPPLFL). At Ser68 the chain carries Phosphoserine. Residues 78-88 (TSENSNLNKNA) show a composition bias toward polar residues. Residues 165–186 (SSSNPGSMSSSPPNSASSIFNS) show a composition bias toward low complexity. Residues 192–206 (PYTSQSFNPLESVQE) are compositionally biased toward polar residues.

Its subcellular location is the cytoplasm. This is an uncharacterized protein from Saccharomyces cerevisiae (strain ATCC 204508 / S288c) (Baker's yeast).